Consider the following 306-residue polypeptide: uncharacterized protein (306 aa).

The next 9 helical transmembrane spans lie at 13 to 33, 53 to 73, 86 to 106, 112 to 132, 147 to 167, 177 to 197, 214 to 234, 246 to 268, and 272 to 294; these read VLLSQFLNGYEWAVPWIFAFI, PLPMILALFVLHIFMPLFAWG, ITGLTLAVVIPTGITSLIWAA, VGLTLSIILVDTVLSPLIVPL, WGMMKGLIVMVVIPSFLGMLF, AFVSSALSPFSKLCLMAVIAI, AGIAVTVFFIALTGYAAAWLI, VSLIFTGGMRNISAGAVLAVTFF, and VAVPVVIGMLFQQILAALFGYML.

The protein localises to the cell membrane. This is an uncharacterized protein from Bacillus subtilis (strain 168).